Reading from the N-terminus, the 98-residue chain is Large ribosomal subunit protein eL21 (98 aa).

Positions 1 to 22 are disordered; sequence MVQMSEGFRRKTRKKLSKHPRE. Residues 10-21 show a composition bias toward basic residues; the sequence is RKTRKKLSKHPR.

This sequence belongs to the eukaryotic ribosomal protein eL21 family.

The chain is Large ribosomal subunit protein eL21 (rpl21e) from Methanocaldococcus jannaschii (strain ATCC 43067 / DSM 2661 / JAL-1 / JCM 10045 / NBRC 100440) (Methanococcus jannaschii).